The following is a 158-amino-acid chain: MSRRHRAVKREILPDPKFGDVVITRFMNALMYDGKKSTAEGIVYGALEVMRRRGGTTADPVAMFHSALDNVKPAVEVRSRRVGGATYQVPVEVRAERRQALAIRWLIDASRKRGENTMQERLSNELMDAVNNRGSAVKKREDTHRMAEANKAFSHYRW.

The protein belongs to the universal ribosomal protein uS7 family. Part of the 30S ribosomal subunit. Contacts proteins S9 and S11.

Functionally, one of the primary rRNA binding proteins, it binds directly to 16S rRNA where it nucleates assembly of the head domain of the 30S subunit. Is located at the subunit interface close to the decoding center, probably blocks exit of the E-site tRNA. This is Small ribosomal subunit protein uS7 from Gluconobacter oxydans (strain 621H) (Gluconobacter suboxydans).